We begin with the raw amino-acid sequence, 5043 residues long: Polyketide synthase PksJ (5043 aa).

Residues 141-481 (AVITDRGMHQ…ELPEIETSYT (341 aa)) form an adenylation 1 region. One can recognise a Carrier 1 domain in the interval 590 to 667 (RVREEIQKHL…RLASYLSEHE (78 aa)). Ser-627 carries the O-(pantetheine 4'-phosphoryl)serine modification. The condensation stretch occupies residues 690–989 (QATFQPLSEV…NMLPIRSELN (300 aa)). An adenylation 2 region spans residues 1181-1578 (TYRELDEKST…EHPGILECVV (398 aa)). The region spanning 1654–1729 (TSPKNIQDTV…NISQYITEQR (76 aa)) is the Carrier 2 domain. O-(pantetheine 4'-phosphoryl)serine is present on Ser-1689. The 427-residue stretch at 1760-2186 (DDSVAIIGIS…GTNTHAIFEQ (427 aa)) folds into the Ketosynthase family 3 (KS3) 1 domain. Active-site for beta-ketoacyl synthase 1 activity residues include Cys-1932, His-2068, and His-2108. An N-terminal hotdog fold region spans residues 2374–2499 (HPLLHQNTSD…GSAELASAAE (126 aa)). A PKS/mFAS DH domain is found at 2374–2661 (HPLLHQNTSD…TRVLEGEVHT (288 aa)). The active-site Proton acceptor; for dehydratase activity is His-2403. Residues 2513 to 2661 (GKGKMSPDQF…TRVLEGEVHT (149 aa)) form a C-terminal hotdog fold region. Asp-2575 acts as the Proton donor; for dehydratase activity in catalysis. Carrier domains follow at residues 3114–3188 (RKLE…VAAY) and 3212–3286 (SSLE…TVEH). Residues Ser-3148 and Ser-3246 each carry the O-(pantetheine 4'-phosphoryl)serine modification. The interval 3291-3314 (VQEREKPEGQEELQTKSSEAPKIT) is disordered. The Ketosynthase family 3 (KS3) 2 domain maps to 3339–3779 (FEPVAIVGIS…GVNAHIVIEE (441 aa)). Catalysis depends on for beta-ketoacyl synthase 2 activity residues Cys-3511, His-3646, and His-3695. Positions 3839 to 3872 (REEMDERLACVAGTMQELEEKLQAFVDGKEETDE) form a coiled coil. Residues 4459-4536 (GLLSETQSWL…RFADWLIGSY (78 aa)) enclose the Carrier 5 domain. Residue Ser-4496 is modified to O-(pantetheine 4'-phosphoryl)serine. The region spanning 4588-4992 (AEGIAVVGLS…GTNAHVIVEA (405 aa)) is the Ketosynthase family 3 (KS3) 3 domain. Cys-4743 serves as the catalytic For beta-ketoacyl synthase 3 activity.

This sequence belongs to the ATP-dependent AMP-binding enzyme family. The cofactor is pantetheine 4'-phosphate.

The protein localises to the cytoplasm. The protein operates within antibiotic biosynthesis; bacillaene biosynthesis. Its function is as follows. Involved in some intermediate steps for the synthesis of the antibiotic polyketide bacillaene which is involved in secondary metabolism. The polypeptide is Polyketide synthase PksJ (pksJ) (Bacillus subtilis (strain 168)).